Consider the following 213-residue polypeptide: MSDATSIKHPSGLTSGDFTAAEEPFALFAEWFAEASGSEPNDPNAMALATVDPDGLPDVRMVLMKGYDSHGFVFYSHIASQKGRELAANPKAALLFHWKSLRRQVRVRGAVTPVSDAEADAYFATRSKQSQIGAWASKQSQPLESRFAFEQAIAGVAAKHLIGAVPRPPGWSGWRVTPARFEFWHDRPFRLHDRIEFRRDTPDHPWTKTRLYP.

FMN contacts are provided by residues 60 to 65 (RMVLMK), 75 to 76 (YS), lysine 82, and glutamine 104. Lysine 65 is a binding site for substrate. 3 residues coordinate substrate: tyrosine 122, arginine 126, and serine 130. Residues 139 to 140 (QS) and tryptophan 184 each bind FMN. Substrate is bound at residue 190–192 (RLH). Arginine 194 serves as a coordination point for FMN.

The protein belongs to the pyridoxamine 5'-phosphate oxidase family. As to quaternary structure, homodimer. It depends on FMN as a cofactor.

It carries out the reaction pyridoxamine 5'-phosphate + O2 + H2O = pyridoxal 5'-phosphate + H2O2 + NH4(+). The enzyme catalyses pyridoxine 5'-phosphate + O2 = pyridoxal 5'-phosphate + H2O2. Its pathway is cofactor metabolism; pyridoxal 5'-phosphate salvage; pyridoxal 5'-phosphate from pyridoxamine 5'-phosphate: step 1/1. It participates in cofactor metabolism; pyridoxal 5'-phosphate salvage; pyridoxal 5'-phosphate from pyridoxine 5'-phosphate: step 1/1. Functionally, catalyzes the oxidation of either pyridoxine 5'-phosphate (PNP) or pyridoxamine 5'-phosphate (PMP) into pyridoxal 5'-phosphate (PLP). The protein is Pyridoxine/pyridoxamine 5'-phosphate oxidase of Rhodopseudomonas palustris (strain BisB18).